We begin with the raw amino-acid sequence, 371 residues long: Macronuclear solute carrier homolog CR-MSC (371 aa).

Solcar repeat units follow at residues 16-111 (RMNY…FYDK), 120-208 (ARPD…CKEN), and 215-304 (PHWI…LSQF). Transmembrane regions (helical) follow at residues 22 to 42 (FAAA…LDMV), 89 to 109 (TFFF…GYFY), 126 to 146 (VAAG…IDIV), 184 to 204 (AGAN…IYDW), 221 to 241 (LWGT…FDMI), and 281 to 301 (FGSF…ICYL).

Belongs to the mitochondrial carrier (TC 2.A.29) family.

It localises to the membrane. In Oxytricha trifallax (Sterkiella histriomuscorum), this protein is Macronuclear solute carrier homolog CR-MSC.